Reading from the N-terminus, the 258-residue chain is Imidazole glycerol phosphate synthase subunit HisF (258 aa).

Residues D11 and D130 contribute to the active site.

This sequence belongs to the HisA/HisF family. Heterodimer of HisH and HisF.

Its subcellular location is the cytoplasm. It carries out the reaction 5-[(5-phospho-1-deoxy-D-ribulos-1-ylimino)methylamino]-1-(5-phospho-beta-D-ribosyl)imidazole-4-carboxamide + L-glutamine = D-erythro-1-(imidazol-4-yl)glycerol 3-phosphate + 5-amino-1-(5-phospho-beta-D-ribosyl)imidazole-4-carboxamide + L-glutamate + H(+). Its pathway is amino-acid biosynthesis; L-histidine biosynthesis; L-histidine from 5-phospho-alpha-D-ribose 1-diphosphate: step 5/9. In terms of biological role, IGPS catalyzes the conversion of PRFAR and glutamine to IGP, AICAR and glutamate. The HisF subunit catalyzes the cyclization activity that produces IGP and AICAR from PRFAR using the ammonia provided by the HisH subunit. This Gluconacetobacter diazotrophicus (strain ATCC 49037 / DSM 5601 / CCUG 37298 / CIP 103539 / LMG 7603 / PAl5) protein is Imidazole glycerol phosphate synthase subunit HisF.